We begin with the raw amino-acid sequence, 85 residues long: U4-theraphotoxin-Hhn1a (85 aa).

The N-terminal stretch at 1–22 (MKVTLIAILTCATVLVLHTTAA) is a signal peptide. Residues 23 to 48 (EELEAESQLMEVGMPDTELAAVDEER) constitute a propeptide that is removed on maturation. Disulfide bonds link Cys52–Cys66, Cys56–Cys77, and Cys71–Cys82.

The protein belongs to the neurotoxin 12 (Hwtx-2) family. 02 (Hwtx-2) subfamily. Monomer. Expressed by the venom gland.

The protein localises to the secreted. Its function is as follows. Neurotoxin active on both insects and mammals. The sequence is that of U4-theraphotoxin-Hhn1a from Cyriopagopus hainanus (Chinese bird spider).